We begin with the raw amino-acid sequence, 105 residues long: uncharacterized protein (105 aa).

A helical membrane pass occupies residues 29 to 49; the sequence is NAFLLILSEAYLLFVFLSYLI.

Its subcellular location is the membrane. This is an uncharacterized protein from Saccharomyces cerevisiae (strain ATCC 204508 / S288c) (Baker's yeast).